The chain runs to 141 residues: Nucleoside diphosphate kinase (141 aa).

ATP is bound by residues Lys11, Phe59, Arg87, Thr93, Arg104, and Asn114. His117 acts as the Pros-phosphohistidine intermediate in catalysis.

Belongs to the NDK family. As to quaternary structure, homotetramer. It depends on Mg(2+) as a cofactor.

Its subcellular location is the cytoplasm. It catalyses the reaction a 2'-deoxyribonucleoside 5'-diphosphate + ATP = a 2'-deoxyribonucleoside 5'-triphosphate + ADP. It carries out the reaction a ribonucleoside 5'-diphosphate + ATP = a ribonucleoside 5'-triphosphate + ADP. Major role in the synthesis of nucleoside triphosphates other than ATP. The ATP gamma phosphate is transferred to the NDP beta phosphate via a ping-pong mechanism, using a phosphorylated active-site intermediate. The sequence is that of Nucleoside diphosphate kinase from Polaromonas naphthalenivorans (strain CJ2).